Reading from the N-terminus, the 153-residue chain is Succinate dehydrogenase assembly factor 2, mitochondrial (153 aa).

The protein belongs to the SDHAF2 family. In terms of assembly, interacts with the flavoprotein subunit within the SDH catalytic dimer.

Its subcellular location is the mitochondrion matrix. Plays an essential role in the assembly of succinate dehydrogenase (SDH), an enzyme complex (also referred to as respiratory complex II) that is a component of both the tricarboxylic acid (TCA) cycle and the mitochondrial electron transport chain, and which couples the oxidation of succinate to fumarate with the reduction of ubiquinone (coenzyme Q) to ubiquinol. Required for flavinylation (covalent attachment of FAD) of the flavoprotein subunit of the SDH catalytic dimer. In Candida glabrata (strain ATCC 2001 / BCRC 20586 / JCM 3761 / NBRC 0622 / NRRL Y-65 / CBS 138) (Yeast), this protein is Succinate dehydrogenase assembly factor 2, mitochondrial.